A 181-amino-acid polypeptide reads, in one-letter code: Adenylate kinase 2 (181 aa).

10–15 (GSGKST) lines the ATP pocket. Residues 30–59 (SMGGILREAIANATPLGIKAKPYVERGDLL) form an NMP region. Residues arginine 36, 57 to 59 (DLL), 85 to 88 (GYPR), and glutamine 92 contribute to the AMP site. The segment at 126–132 (NRSLFDD) is LID. Arginine 127 lines the ATP pocket. Arginine 140 serves as a coordination point for AMP. An ATP-binding site is contributed by proline 168.

This sequence belongs to the adenylate kinase family. Monomer.

It is found in the cytoplasm. It catalyses the reaction AMP + ATP = 2 ADP. The protein operates within purine metabolism; AMP biosynthesis via salvage pathway; AMP from ADP: step 1/1. In terms of biological role, catalyzes the reversible transfer of the terminal phosphate group between ATP and AMP. Plays an important role in cellular energy homeostasis and in adenine nucleotide metabolism. The sequence is that of Adenylate kinase 2 from Synechocystis sp. (strain ATCC 27184 / PCC 6803 / Kazusa).